A 544-amino-acid polypeptide reads, in one-letter code: Putative pentatricopeptide repeat-containing protein At5g59200, chloroplastic (544 aa).

Residues 1–21 are disordered; the sequence is MISSLAAITGGPSTFRRDPDS. The transit peptide at 1 to 25 directs the protein to the chloroplast; sequence MISSLAAITGGPSTFRRDPDSNTLR. 11 PPR repeats span residues 60–90, 91–125, 127–156, 157–187, 188–218, 219–253, 254–288, 289–319, 320–354, 355–385, and 391–421; these read DAFV…VSNP, NVYL…SVLP, NYVI…GFGS, SRSV…MPDR, DHVA…VKIK, DTVC…NVSA, NEFT…RMEL, SNFV…MRDK, DVIS…GFRP, NQVT…MKRV, and QIEH…IPIE. The tract at residues 426-501 is type E motif; sequence MLGTLLSACK…EPGCSTIEVD (76 aa). The type E(+) motif stretch occupies residues 502-532; the sequence is NQIHEFLVGDIAHPHKEAIYQRLQELNRILR.

It belongs to the PPR family. PCMP-E subfamily.

It is found in the plastid. The protein resides in the chloroplast. In terms of biological role, involved in RNA editing event in chloroplasts. Required for the editing of a single site in rpl23 transcript. The chain is Putative pentatricopeptide repeat-containing protein At5g59200, chloroplastic (PCMP-E41) from Arabidopsis thaliana (Mouse-ear cress).